The sequence spans 422 residues: Histidine--tRNA ligase (422 aa).

The protein belongs to the class-II aminoacyl-tRNA synthetase family. In terms of assembly, homodimer.

The protein resides in the cytoplasm. The enzyme catalyses tRNA(His) + L-histidine + ATP = L-histidyl-tRNA(His) + AMP + diphosphate + H(+). The chain is Histidine--tRNA ligase from Mycolicibacterium vanbaalenii (strain DSM 7251 / JCM 13017 / BCRC 16820 / KCTC 9966 / NRRL B-24157 / PYR-1) (Mycobacterium vanbaalenii).